Consider the following 133-residue polypeptide: Small ribosomal subunit protein uS8 (133 aa).

The protein belongs to the universal ribosomal protein uS8 family. As to quaternary structure, part of the 30S ribosomal subunit. Contacts proteins S5 and S12.

In terms of biological role, one of the primary rRNA binding proteins, it binds directly to 16S rRNA central domain where it helps coordinate assembly of the platform of the 30S subunit. This is Small ribosomal subunit protein uS8 from Microcystis aeruginosa (strain NIES-843 / IAM M-2473).